A 124-amino-acid polypeptide reads, in one-letter code: Small ribosomal subunit protein uS12 (124 aa).

Residue D89 is modified to 3-methylthioaspartic acid.

This sequence belongs to the universal ribosomal protein uS12 family. As to quaternary structure, part of the 30S ribosomal subunit. Contacts proteins S8 and S17. May interact with IF1 in the 30S initiation complex.

In terms of biological role, with S4 and S5 plays an important role in translational accuracy. Interacts with and stabilizes bases of the 16S rRNA that are involved in tRNA selection in the A site and with the mRNA backbone. Located at the interface of the 30S and 50S subunits, it traverses the body of the 30S subunit contacting proteins on the other side and probably holding the rRNA structure together. The combined cluster of proteins S8, S12 and S17 appears to hold together the shoulder and platform of the 30S subunit. The sequence is that of Small ribosomal subunit protein uS12 from Blochmanniella pennsylvanica (strain BPEN).